The primary structure comprises 850 residues: Transforming growth factor beta receptor type 3 (850 aa).

The first 22 residues, 1-22, serve as a signal peptide directing secretion; the sequence is MAVTSHHMVPVFVLMSACLATA. The Extracellular segment spans residues 23–785; it reads GPEPSTRCEL…QIFHGLDTLT (763 aa). Residues C54 and C199 are joined by a disulfide bond. N-linked (GlcNAc...) asparagine glycans are attached at residues N143 and N491. The 275-residue stretch at 454 to 728 folds into the ZP domain; that stretch reads KCDNEKMVVA…PKCVTPDDAC (275 aa). Residues 528–557 are disordered; that stretch reads SPGDSSGWPDGYEDLESGDNGFPGDTDEGE. O-linked (Xyl...) (glycosaminoglycan) serine glycans are attached at residues S533 and S544. Residues N570, N589, and N696 are each glycosylated (N-linked (GlcNAc...) asparagine). Cystine bridges form between C638-C704, C659-C728, and C709-C721. The tract at residues 735–749 is interaction with TGF-beta ligand; it reads MIWTMMQNKKTFTKP. The chain crosses the membrane as a helical span at residues 786-808; sequence VMGIAFAAFVIGALLTGALWYIY. At 809–850 the chain is on the cytoplasmic side; sequence SHTGETARRQQVPTSPPASENSSAAHSIGSTQSTPCSSSSTA. Polar residues predominate over residues 817-833; it reads RQQVPTSPPASENSSAA. The interval 817–850 is disordered; sequence RQQVPTSPPASENSSAAHSIGSTQSTPCSSSSTA. Positions 835 to 850 are enriched in low complexity; that stretch reads SIGSTQSTPCSSSSTA. T839 carries the phosphothreonine modification.

Forms homodimers and homooligomers. Interacts with DYNLT4. Interacts with integrin ITGA5:ITGB1; this interaction promotes the internalization and trafficking of ITGA5:ITGB1 into endocytic vesicles. Interacts with TGFB1, BMP2, BMP5, BMP7 or GDF5 and inhibin A via the ligand binding domains. Interacts with ALK3/BMPR1A; this interaction results in the cell surface retention of BMPR1A. Interacts with ALK6/BMPR1B; this interaction enhances BMPR1B-mediated stimulation of the BMP signaling pathway. Interacts with the scaffolding protein beta-arrestin2/ARRB2; this interaction mediates internalization of TGFBR3 and thus regulates migration, actin cytoskeleton and activation of CDC42. In terms of processing, extensively modified by glycosaminoglycan groups (GAG). Post-translationally, phosphorylated in the cytoplasmic domain by the type II receptor TGFBR2 at THR-839 to mediate recruitment of ARRB2 and subsequent internalization of TGFBR2 and TGFBR3.

The protein resides in the cell membrane. It is found in the secreted. Its subcellular location is the extracellular space. The protein localises to the extracellular matrix. Functionally, cell surface receptor that regulates diverse cellular processes including cell proliferation, differentiation, migration, and apoptosis. Initiates BMP, inhibin, and TGF-beta signaling pathways by interacting with different ligands including TGFB1, BMP2, BMP5, BMP7 or GDF5. Alternatively, acts as a cell surface coreceptor for BMP ligands, serving to enhance ligand binding by differentially regulating BMPR1A/ALK3 and BMPR1B/ALK6 receptor trafficking. Promotes epithelial cell adhesion, focal adhesion formation and integrin signaling during epithelial cell spreading on fibronectin. By interacting with the scaffolding protein beta-arrestin2/ARRB2, regulates migration or actin cytoskeleton and promotes the activation of CDC42 as well as the inhibition of NF-kappa-B. In gonadotrope cells, acts as an inhibin A coreceptor and regulates follicle-stimulating hormone (FSH) levels and female fertility. Plays a role in the inhibition of directed and random cell migration in epithelial cells by altering the actin cytoskeletal organization. Participates in epithelial-mesenchymal transformation (EMT) upon binding to BMP2 or TGFB2, by activating the PAR6/SMURF1/RHOA pathway. The sequence is that of Transforming growth factor beta receptor type 3 (Tgfbr3) from Mus musculus (Mouse).